A 128-amino-acid polypeptide reads, in one-letter code: Adrenodoxin homolog (128 aa).

Residues 12–115 (EQIRIFFKTM…NAVFTVPRAT (104 aa)) form the 2Fe-2S ferredoxin-type domain. Residues cysteine 50, cysteine 56, cysteine 59, and cysteine 96 each contribute to the [2Fe-2S] cluster site.

The protein belongs to the adrenodoxin/putidaredoxin family. The cofactor is [2Fe-2S] cluster.

Its subcellular location is the mitosome. Ferredoxins are iron-sulfur proteins that transfer electrons in a wide variety of metabolic reactions. This chain is Adrenodoxin homolog, found in Encephalitozoon cuniculi (strain GB-M1) (Microsporidian parasite).